The chain runs to 428 residues: MTRSDELFEQAKKTIPGGVNSPVRAFNGVGGSPRFIDKADGAYIYDADGKAYIDYVGSWGPMILGHNHPKIRQAVLEAVENGLSFGAPTELEVKMAEKVIEMVPSMEQVRMVSSGTEATMSAIRLARGFTNRDKILKFEGCYHGHADCLLVKAGSGALTLGQPSSPGIPEDFAKHTLTATYNELESVKTLFEQYPEEISCIILEPVAGNMNCIPPVEGFLEGLRAICDQYGALLIIDEVMTGFRVSKSGAQGHYGITPDLTTLGKVIGGGMPVGAFGGRKDVMQFIAPTGPVYQAGTLSGNPIAMSAGLAQMEELCAEGLYQELAAKTKRIAEGFKAAANKHGIPMSINYVGGMFGFFFTEEEKVTRFDQVTQCDAEKFPEFYHGMLDEGVYLAPSAYEAGFLSMAHGEKELEETLAAAERVFAKMAK.

The residue at position 265 (Lys-265) is an N6-(pyridoxal phosphate)lysine.

The protein belongs to the class-III pyridoxal-phosphate-dependent aminotransferase family. HemL subfamily. As to quaternary structure, homodimer. Pyridoxal 5'-phosphate serves as cofactor.

The protein localises to the cytoplasm. The catalysed reaction is (S)-4-amino-5-oxopentanoate = 5-aminolevulinate. Its pathway is porphyrin-containing compound metabolism; protoporphyrin-IX biosynthesis; 5-aminolevulinate from L-glutamyl-tRNA(Glu): step 2/2. This is Glutamate-1-semialdehyde 2,1-aminomutase from Shewanella woodyi (strain ATCC 51908 / MS32).